We begin with the raw amino-acid sequence, 146 residues long: Hemoglobin subunit beta (146 aa).

N-acetylvaline; partial is present on V1. In terms of domain architecture, Globin spans 2–146 (HLTDAEKAAV…VANALAHKYH (145 aa)). A Phosphothreonine modification is found at T12. K59 is subject to N6-acetyllysine. A heme b-binding site is contributed by H63. N6-acetyllysine is present on K82. H92 contributes to the heme b binding site. S-nitrosocysteine is present on C93. K144 bears the N6-acetyllysine mark.

It belongs to the globin family. In terms of assembly, heterotetramer of two alpha chains and two beta chains. In terms of tissue distribution, red blood cells.

Its function is as follows. Involved in oxygen transport from the lung to the various peripheral tissues. This chain is Hemoglobin subunit beta (HBB), found in Procavia capensis habessinica (Abyssinian hyrax).